The following is a 29-amino-acid chain: Glucagon (29 aa).

This sequence belongs to the glucagon family.

The protein localises to the secreted. Its function is as follows. Glucagon plays a key role in glucose metabolism and homeostasis. Regulates blood glucose by increasing gluconeogenesis and decreasing glycolysis. The protein is Glucagon (gcg) of Polypterus senegalus (Senegal bichir).